A 51-amino-acid chain; its full sequence is Large ribosomal subunit protein eL39z (51 aa).

It belongs to the eukaryotic ribosomal protein eL39 family.

This chain is Large ribosomal subunit protein eL39z (RPL39A), found in Oryza sativa subsp. japonica (Rice).